Here is a 539-residue protein sequence, read N- to C-terminus: CTP synthase (539 aa).

The interval 1-267 (MTKYIFVTGG…DQKVVDFLHI (267 aa)) is amidoligase domain. Ser13 is a CTP binding site. Ser13 contacts UTP. Residue 14-19 (SLGKGI) participates in ATP binding. Tyr54 is a binding site for L-glutamine. Asp71 serves as a coordination point for ATP. Residues Asp71 and Glu141 each coordinate Mg(2+). Residues 148–150 (DME), 188–193 (KSKPTQ), and Lys224 each bind CTP. UTP contacts are provided by residues 188 to 193 (KSKPTQ) and Lys224. The Glutamine amidotransferase type-1 domain maps to 294-537 (KITLVGKYVE…IGAASGLQVD (244 aa)). Gly356 contacts L-glutamine. Cys383 serves as the catalytic Nucleophile; for glutamine hydrolysis. Residues 384 to 387 (LGMQ), Glu407, and Arg465 each bind L-glutamine. Catalysis depends on residues His510 and Glu512.

It belongs to the CTP synthase family. In terms of assembly, homotetramer.

It catalyses the reaction UTP + L-glutamine + ATP + H2O = CTP + L-glutamate + ADP + phosphate + 2 H(+). It carries out the reaction L-glutamine + H2O = L-glutamate + NH4(+). The enzyme catalyses UTP + NH4(+) + ATP = CTP + ADP + phosphate + 2 H(+). It participates in pyrimidine metabolism; CTP biosynthesis via de novo pathway; CTP from UDP: step 2/2. With respect to regulation, allosterically activated by GTP, when glutamine is the substrate; GTP has no effect on the reaction when ammonia is the substrate. The allosteric effector GTP functions by stabilizing the protein conformation that binds the tetrahedral intermediate(s) formed during glutamine hydrolysis. Inhibited by the product CTP, via allosteric rather than competitive inhibition. Its function is as follows. Catalyzes the ATP-dependent amination of UTP to CTP with either L-glutamine or ammonia as the source of nitrogen. Regulates intracellular CTP levels through interactions with the four ribonucleotide triphosphates. This chain is CTP synthase, found in Lactobacillus delbrueckii subsp. bulgaricus (strain ATCC 11842 / DSM 20081 / BCRC 10696 / JCM 1002 / NBRC 13953 / NCIMB 11778 / NCTC 12712 / WDCM 00102 / Lb 14).